We begin with the raw amino-acid sequence, 469 residues long: ABHD16B (469 aa).

The region spanning 174–298 (VICCEGNAGF…GLVVRTVREH (125 aa)) is the AB hydrolase-1 domain. Residues S247, D322, and H418 each act as charge relay system in the active site.

It belongs to the AB hydrolase superfamily. ABHD16 family.

It carries out the reaction a 1,2-diacyl-sn-glycero-3-phospho-L-serine + H2O = a 2-acyl-sn-glycero-3-phospho-L-serine + a fatty acid + H(+). The enzyme catalyses a 1-acylglycerol + H2O = glycerol + a fatty acid + H(+). The catalysed reaction is 1-(9Z-octadecenoyl)-glycerol + H2O = glycerol + (9Z)-octadecenoate + H(+). In terms of biological role, hydrolyzes the sn-1 position of glycerophospholipids with high specificity towards phosphatidylserine (PS), PS-PLA1 enzyme. Also hydrolyzes the acyl chain of glycerolipids with a preference for the monoacylglycerol (MAG) 1-acylglycerol, MAG lipase. Plays a regulatory role in cellular lipid homeostasis by modulating genes involved in neutral lipid degradation and in phospholipid synthesis and composition. This Homo sapiens (Human) protein is ABHD16B.